Reading from the N-terminus, the 253-residue chain is 5'/3'-nucleotidase SurE (253 aa).

4 residues coordinate a divalent metal cation: Asp8, Asp9, Ser39, and Asn92.

This sequence belongs to the SurE nucleotidase family. It depends on a divalent metal cation as a cofactor.

The protein resides in the cytoplasm. It carries out the reaction a ribonucleoside 5'-phosphate + H2O = a ribonucleoside + phosphate. The catalysed reaction is a ribonucleoside 3'-phosphate + H2O = a ribonucleoside + phosphate. The enzyme catalyses [phosphate](n) + H2O = [phosphate](n-1) + phosphate + H(+). Its function is as follows. Nucleotidase with a broad substrate specificity as it can dephosphorylate various ribo- and deoxyribonucleoside 5'-monophosphates and ribonucleoside 3'-monophosphates with highest affinity to 3'-AMP. Also hydrolyzes polyphosphate (exopolyphosphatase activity) with the preference for short-chain-length substrates (P20-25). Might be involved in the regulation of dNTP and NTP pools, and in the turnover of 3'-mononucleotides produced by numerous intracellular RNases (T1, T2, and F) during the degradation of various RNAs. This Salmonella paratyphi B (strain ATCC BAA-1250 / SPB7) protein is 5'/3'-nucleotidase SurE.